The sequence spans 654 residues: Glutamyl-tRNA(Gln) amidotransferase subunit B, mitochondrial (654 aa).

Residues 1 to 8 constitute a mitochondrion transit peptide; it reads MGRIPTRE. Positions 79 to 101 are disordered; that stretch reads DQAKASKAQAKGKKKRSSADNQT.

The protein belongs to the GatB/GatE family. GatB subfamily. As to quaternary structure, subunit of the heterotrimeric GatCAB amidotransferase (AdT) complex, composed of A, B and C subunits.

The protein localises to the mitochondrion. The enzyme catalyses L-glutamyl-tRNA(Gln) + L-glutamine + ATP + H2O = L-glutaminyl-tRNA(Gln) + L-glutamate + ADP + phosphate + H(+). In terms of biological role, allows the formation of correctly charged Gln-tRNA(Gln) through the transamidation of misacylated Glu-tRNA(Gln) in the mitochondria. The reaction takes place in the presence of glutamine and ATP through an activated gamma-phospho-Glu-tRNA(Gln). In Pyricularia oryzae (strain 70-15 / ATCC MYA-4617 / FGSC 8958) (Rice blast fungus), this protein is Glutamyl-tRNA(Gln) amidotransferase subunit B, mitochondrial.